We begin with the raw amino-acid sequence, 387 residues long: Growth-regulating factor 3 (387 aa).

Residues 53–88 (PFTAAQYEELEQQALIYKYLVAGVPVPADLLLPIRR) enclose the QLQ domain. 2 consecutive short sequence motifs (bipartite nuclear localization signal) follow at residues 111–129 (KKLDPEPGRCRRTDGKKWR) and 147–154 (RGRNRSRK). The 45-residue stretch at 114-158 (DPEPGRCRRTDGKKWRCSKEAAPDSKYCERHMHRGRNRSRKPVEA) folds into the WRC domain. Positions 145–176 (MHRGRNRSRKPVEAQLVAPHSQPPATAPAAAV) are disordered.

It belongs to the GRF family.

It is found in the nucleus. In terms of biological role, transcription activator that plays a regulatory role in gibberellin-induced stem elongation. This Oryza sativa subsp. japonica (Rice) protein is Growth-regulating factor 3 (GRF3).